A 5043-amino-acid chain; its full sequence is Polyketide synthase PksJ (5043 aa).

Residues alanine 141–threonine 481 form an adenylation 1 region. In terms of domain architecture, Carrier 1 spans arginine 590–glutamate 667. At serine 627 the chain carries O-(pantetheine 4'-phosphoryl)serine. Residues glutamine 690 to asparagine 989 form a condensation region. Residues threonine 1181–valine 1578 are adenylation 2. In terms of domain architecture, Carrier 2 spans threonine 1654 to arginine 1729. The residue at position 1689 (serine 1689) is an O-(pantetheine 4'-phosphoryl)serine. Positions aspartate 1760 to glutamine 2186 constitute a Ketosynthase family 3 (KS3) 1 domain. Residues cysteine 1932, histidine 2068, and histidine 2108 each act as for beta-ketoacyl synthase 1 activity in the active site. Residues histidine 2374 to glutamate 2499 are N-terminal hotdog fold. In terms of domain architecture, PKS/mFAS DH spans histidine 2374–threonine 2661. The active-site Proton acceptor; for dehydratase activity is histidine 2403. Positions glycine 2513–threonine 2661 are C-terminal hotdog fold. Residue aspartate 2575 is the Proton donor; for dehydratase activity of the active site. 2 consecutive Carrier domains span residues arginine 3114 to tyrosine 3188 and serine 3212 to histidine 3286. O-(pantetheine 4'-phosphoryl)serine is present on residues serine 3148 and serine 3246. The segment at valine 3291–threonine 3314 is disordered. The region spanning phenylalanine 3339–glutamate 3779 is the Ketosynthase family 3 (KS3) 2 domain. Active-site for beta-ketoacyl synthase 2 activity residues include cysteine 3511, histidine 3646, and histidine 3695. The stretch at arginine 3839 to glutamate 3872 forms a coiled coil. A Carrier 5 domain is found at glycine 4459–tyrosine 4536. Serine 4496 bears the O-(pantetheine 4'-phosphoryl)serine mark. The Ketosynthase family 3 (KS3) 3 domain occupies alanine 4588–alanine 4992. Cysteine 4743 acts as the For beta-ketoacyl synthase 3 activity in catalysis.

The protein belongs to the ATP-dependent AMP-binding enzyme family. Pantetheine 4'-phosphate serves as cofactor.

The protein localises to the cytoplasm. Its pathway is antibiotic biosynthesis; bacillaene biosynthesis. Involved in some intermediate steps for the synthesis of the antibiotic polyketide bacillaene which is involved in secondary metabolism. The sequence is that of Polyketide synthase PksJ (pksJ) from Bacillus subtilis (strain 168).